Here is a 147-residue protein sequence, read N- to C-terminus: Gastrula-specific protein 17 (147 aa).

A disordered region spans residues 1-119 (MSQNLDFLAL…TQVYGNHQPG (119 aa)). Polar residues-rich tracts occupy residues 20 to 36 (SPTSRHPSPKVWNSTPP), 45 to 57 (RQISPTPDQYTNP), and 74 to 88 (LLQNQRQSWGLSPTA).

The protein is Gastrula-specific protein 17 (gs17) of Xenopus laevis (African clawed frog).